Reading from the N-terminus, the 157-residue chain is Glycine-rich RNA-binding, abscisic acid-inducible protein (157 aa).

Residues 8–86 (YRCFVGGLAW…RNITVNQAQS (79 aa)) form the RRM domain. The disordered stretch occupies residues 82 to 157 (NQAQSRGGGG…YGGGGGGWRD (76 aa)). A compositionally biased stretch (gly residues) spans 87–157 (RGGGGGGGGY…YGGGGGGWRD (71 aa)).

Possibly has a role in RNA transcription or processing during stress. This Zea mays (Maize) protein is Glycine-rich RNA-binding, abscisic acid-inducible protein (RAB15).